Consider the following 324-residue polypeptide: Carbonic anhydrase, chloroplastic (324 aa).

Belongs to the beta-class carbonic anhydrase family. In terms of assembly, homohexamer.

Its subcellular location is the plastid. It is found in the chloroplast stroma. The catalysed reaction is hydrogencarbonate + H(+) = CO2 + H2O. Functionally, reversible hydration of carbon dioxide. The chain is Carbonic anhydrase, chloroplastic from Hordeum vulgare (Barley).